Consider the following 1087-residue polypeptide: Exportin-7 (1087 aa).

An N-acetylalanine modification is found at Ala-2. The 67-residue stretch at Ala-30–Thr-96 folds into the Importin N-terminal domain. Ser-570 bears the Phosphoserine mark.

This sequence belongs to the exportin family. Binds to nucleoporins. Found in a complex with XPO7, EIF4A1, ARHGAP1, VPS26A, VPS29, VPS35 and SFN. Interacts with ARHGAP1 and SFN. Interacts with Ran and cargo proteins in a GTP-dependent manner.

The protein localises to the cytoplasm. Its subcellular location is the nucleus. It is found in the nuclear pore complex. Its function is as follows. Mediates the nuclear export of proteins (cargos) with broad substrate specificity. In the nucleus binds cooperatively to its cargo and to the GTPase Ran in its active GTP-bound form. Docking of this trimeric complex to the nuclear pore complex (NPC) is mediated through binding to nucleoporins. Upon transit of a nuclear export complex into the cytoplasm, disassembling of the complex and hydrolysis of Ran-GTP to Ran-GDP (induced by RANBP1 and RANGAP1, respectively) cause release of the cargo from the export receptor. XPO7 then return to the nuclear compartment and mediate another round of transport. The directionality of nuclear export is thought to be conferred by an asymmetric distribution of the GTP- and GDP-bound forms of Ran between the cytoplasm and nucleus. The sequence is that of Exportin-7 (XPO7) from Pongo abelii (Sumatran orangutan).